The following is a 301-amino-acid chain: MPIIIDKDLPARKVLQEENIFVMTKERAETQDIRALKIAILNLMPTKQETEAQLLRLIGNTPLQLDVHLLHMESHLSRNVAQEHLTSFYKTFRDIENEKFDGLIITGAPVETLSFEEVDYWEELKRIMEYSKTNVTSTLHICWGAQAGLYHHYGVPKYPLKEKMFGVFEHEVREQHVKLLQGFDELFFAPHSRHTEVRENDIRGVKELTLLANSEEAGVHLVIGPEGRQVFALGHSEYSCDTLKQEYERDRQKGLNIDVPKNYFKHNNPNEKPLVRWRSHGNLLFSNWLNYYVYQETPYVL.

The active-site Acyl-thioester intermediate is the cysteine 142. Substrate contacts are provided by lysine 163 and serine 192. Histidine 235 serves as the catalytic Proton acceptor. Glutamate 237 is an active-site residue. Residue arginine 249 coordinates substrate.

Belongs to the MetA family.

It is found in the cytoplasm. The catalysed reaction is L-homoserine + acetyl-CoA = O-acetyl-L-homoserine + CoA. The protein operates within amino-acid biosynthesis; L-methionine biosynthesis via de novo pathway; O-acetyl-L-homoserine from L-homoserine: step 1/1. In terms of biological role, transfers an acetyl group from acetyl-CoA to L-homoserine, forming acetyl-L-homoserine. In Bacillus cereus (strain 03BB102), this protein is Homoserine O-acetyltransferase.